Consider the following 278-residue polypeptide: Ferredoxin--NADP reductase A (278 aa).

The FAD-binding FR-type domain maps to 3–103 (PGYTEETVLE…KRATGTLTIG (101 aa)). FAD is bound by residues 52–55 (RAYS) and Thr118.

The protein belongs to the ferredoxin--NADP reductase type 1 family. The cofactor is FAD.

The enzyme catalyses 2 reduced [4Fe-4S]-[ferredoxin] + NADP(+) + H(+) = 2 oxidized [4Fe-4S]-[ferredoxin] + NADPH. Its function is as follows. Transports electrons between NADPH and ferredoxin. Can transfer electrons to ferredoxins Fdx2 and Fdx8. Prefers NADPH to NADH. The protein is Ferredoxin--NADP reductase A of Sorangium cellulosum (strain So ce56) (Polyangium cellulosum (strain So ce56)).